The chain runs to 459 residues: Glycosyl hydrolase family 109 protein (459 aa).

The tat-type signal signal peptide spans 1–31; that stretch reads MHNIHRRNFLKAAGAATAGLVTANIALSAYA. NAD(+) contacts are provided by residues 64–65, Asp86, 135–138, 155–156, and Asn184; these read ER, WEWH, and EV. Residues Tyr213, Arg232, 244 to 247, and Tyr326 each bind substrate; that span reads YPTH. Tyr244 lines the NAD(+) pocket.

It belongs to the Gfo/Idh/MocA family. Glycosyl hydrolase 109 subfamily. NAD(+) is required as a cofactor. Post-translationally, predicted to be exported by the Tat system. The position of the signal peptide cleavage has not been experimentally proven.

Its function is as follows. Glycosidase. The polypeptide is Glycosyl hydrolase family 109 protein (Shewanella baltica (strain OS185)).